The chain runs to 394 residues: uncharacterized protein (394 aa).

2 consecutive transmembrane segments (helical) span residues 31 to 51 (LAILSLFLGIAACILIALSGL) and 57 to 77 (LIIALSLISIIVLSTGISLLI).

Belongs to the chlamydial CPn_0129/CT_036/TC_0306 family.

Its subcellular location is the cell membrane. This is an uncharacterized protein from Chlamydia pneumoniae (Chlamydophila pneumoniae).